The chain runs to 648 residues: Macrolide export ATP-binding/permease protein MacB (648 aa).

In terms of domain architecture, ABC transporter spans 5–243; sequence LELKDIRRSY…TGGTEPVVNT (239 aa). Position 41 to 48 (41 to 48) interacts with ATP; the sequence is GASGSGKS. The next 4 helical transmembrane spans lie at 273-293, 523-543, 576-596, and 611-631; these read LLTM…VVVG, LFLT…VMNI, AVLV…LIAF, and PLAL…FGWL.

This sequence belongs to the ABC transporter superfamily. Macrolide exporter (TC 3.A.1.122) family. As to quaternary structure, homodimer. Part of the tripartite efflux system MacAB-TolC, which is composed of an inner membrane transporter, MacB, a periplasmic membrane fusion protein, MacA, and an outer membrane component, TolC. The complex forms a large protein conduit and can translocate molecules across both the inner and outer membranes. Interacts with MacA.

The protein localises to the cell inner membrane. In terms of biological role, part of the tripartite efflux system MacAB-TolC. MacB is a non-canonical ABC transporter that contains transmembrane domains (TMD), which form a pore in the inner membrane, and an ATP-binding domain (NBD), which is responsible for energy generation. Confers resistance against macrolides. In Escherichia coli O6:K15:H31 (strain 536 / UPEC), this protein is Macrolide export ATP-binding/permease protein MacB.